A 352-amino-acid polypeptide reads, in one-letter code: Chorismate synthase (352 aa).

An NADP(+)-binding site is contributed by Arg-48. FMN-binding positions include 125–127, 238–239, Gly-278, 293–297, and Arg-319; these read RSS, NA, and KPTSS.

It belongs to the chorismate synthase family. Homotetramer. It depends on FMNH2 as a cofactor.

The enzyme catalyses 5-O-(1-carboxyvinyl)-3-phosphoshikimate = chorismate + phosphate. It functions in the pathway metabolic intermediate biosynthesis; chorismate biosynthesis; chorismate from D-erythrose 4-phosphate and phosphoenolpyruvate: step 7/7. Catalyzes the anti-1,4-elimination of the C-3 phosphate and the C-6 proR hydrogen from 5-enolpyruvylshikimate-3-phosphate (EPSP) to yield chorismate, which is the branch point compound that serves as the starting substrate for the three terminal pathways of aromatic amino acid biosynthesis. This reaction introduces a second double bond into the aromatic ring system. The protein is Chorismate synthase of Legionella pneumophila (strain Lens).